The sequence spans 68 residues: Venom-like beta-defensin (68 aa).

Residues Met-1–Val-24 form the signal peptide. 3 disulfides stabilise this stretch: Cys-33-Cys-60, Cys-40-Cys-54, and Cys-47-Cys-61.

Highly expressed in intestine, liver and spleen and expressed at lower levels in brain, kidney, lung, testis and venom gland.

Its subcellular location is the secreted. Its function is as follows. Potent antimicrobial peptide that displays activity against S.aureus and P.aeruginosa. Does not inhibit growth of E.coli. The chain is Venom-like beta-defensin from Ornithorhynchus anatinus (Duckbill platypus).